The following is a 75-amino-acid chain: MAGQEDPVQREIHQDWANREYIEIITSSIKKIADFLNSFDMSCRSRLATLNEKLTALERRIEYIEARVTKGETLT.

At alanine 2 the chain carries N-acetylalanine. Residues 41-72 (MSCRSRLATLNEKLTALERRIEYIEARVTKGE) are a coiled coil.

Belongs to the BRK1 family. Homotrimer when in free form. Directly interacts with WASF2. Component of the WAVE1 complex composed of ABI2, CYFIP1 or CYFIP2, BRK1, NCKAP1 and WASF1/WAVE1. Within the complex, a heterodimer containing NCKAP1 and CYFIP1 interacts with a heterotrimer formed by WAVE1, ABI2 and BRK1.

Its subcellular location is the cytoplasm. The protein localises to the cytoskeleton. Involved in regulation of actin and microtubule organization. Part of a WAVE complex that activates the Arp2/3 complex. As component of the WAVE1 complex, required for BDNF-NTRK2 endocytic trafficking and signaling from early endosomes. This chain is Protein BRICK1 (BRK1), found in Homo sapiens (Human).